Here is a 159-residue protein sequence, read N- to C-terminus: NADH-quinone oxidoreductase subunit I (159 aa).

2 4Fe-4S ferredoxin-type domains span residues Arg51 to Asp80 and Thr90 to Asn119. [4Fe-4S] cluster is bound by residues Cys60, Cys63, Cys66, Cys70, Cys99, Cys102, Cys105, and Cys109.

It belongs to the complex I 23 kDa subunit family. NDH-1 is composed of 14 different subunits. Subunits NuoA, H, J, K, L, M, N constitute the membrane sector of the complex. Requires [4Fe-4S] cluster as cofactor.

The protein localises to the cell inner membrane. The catalysed reaction is a quinone + NADH + 5 H(+)(in) = a quinol + NAD(+) + 4 H(+)(out). Its function is as follows. NDH-1 shuttles electrons from NADH, via FMN and iron-sulfur (Fe-S) centers, to quinones in the respiratory chain. The immediate electron acceptor for the enzyme in this species is believed to be ubiquinone. Couples the redox reaction to proton translocation (for every two electrons transferred, four hydrogen ions are translocated across the cytoplasmic membrane), and thus conserves the redox energy in a proton gradient. This chain is NADH-quinone oxidoreductase subunit I, found in Rickettsia conorii (strain ATCC VR-613 / Malish 7).